The sequence spans 282 residues: tRNA pseudouridine synthase B (282 aa).

Aspartate 39 acts as the Nucleophile in catalysis.

It belongs to the pseudouridine synthase TruB family. Type 1 subfamily.

It carries out the reaction uridine(55) in tRNA = pseudouridine(55) in tRNA. Responsible for synthesis of pseudouridine from uracil-55 in the psi GC loop of transfer RNAs. This Borreliella afzelii (strain PKo) (Borrelia afzelii) protein is tRNA pseudouridine synthase B.